The following is a 270-amino-acid chain: Shikimate dehydrogenase (NADP(+)) (270 aa).

Residues 15 to 17 and T62 contribute to the shikimate site; that span reads SLS. Catalysis depends on K66, which acts as the Proton acceptor. Shikimate-binding residues include N87 and D102. NADP(+) is bound by residues 126-130, 149-154, and I210; these read GAGGS and NRTVGR. Residue Y212 coordinates shikimate. G233 is a binding site for NADP(+).

It belongs to the shikimate dehydrogenase family. Homodimer.

The enzyme catalyses shikimate + NADP(+) = 3-dehydroshikimate + NADPH + H(+). It participates in metabolic intermediate biosynthesis; chorismate biosynthesis; chorismate from D-erythrose 4-phosphate and phosphoenolpyruvate: step 4/7. Functionally, involved in the biosynthesis of the chorismate, which leads to the biosynthesis of aromatic amino acids. Catalyzes the reversible NADPH linked reduction of 3-dehydroshikimate (DHSA) to yield shikimate (SA). The protein is Shikimate dehydrogenase (NADP(+)) of Hyphomonas neptunium (strain ATCC 15444).